The sequence spans 188 residues: MYFRTGFCLFYFFQWRCSVISDKTRINEKIRGKEFRIISFDGEQLGIMTAEQALNLASSQGYDLVEIAPSATPPVCKIMDYSKYKYEQTRKLKEAKKNQKQVVIKEIKVTARIDSHDLETKLNQVTKFLEKENKVKVTLVLFGREKMHANLGVTTLDEIAEKFSETAEVEKKYADKQKHLILSPKKVK.

It belongs to the IF-3 family. In terms of assembly, monomer.

The protein resides in the cytoplasm. IF-3 binds to the 30S ribosomal subunit and shifts the equilibrium between 70S ribosomes and their 50S and 30S subunits in favor of the free subunits, thus enhancing the availability of 30S subunits on which protein synthesis initiation begins. The chain is Translation initiation factor IF-3 from Fusobacterium nucleatum subsp. nucleatum (strain ATCC 25586 / DSM 15643 / BCRC 10681 / CIP 101130 / JCM 8532 / KCTC 2640 / LMG 13131 / VPI 4355).